The sequence spans 300 residues: LysM and putative peptidoglycan-binding domain-containing protein 3 (300 aa).

The Extracellular segment spans residues 1 to 216; sequence MAGRNQNRTA…PYYGADWGMG (216 aa). Residues Asn-7 and Asn-26 are each glycosylated (N-linked (GlcNAc...) asparagine). Ser-55 bears the Phosphoserine mark. The region spanning 65–109 is the LysM domain; sequence LTKDIQEGDTLNAVALQYCCTVADIKRVNNLISDQDFFALRSIKI. The tract at residues 136 to 157 is disordered; the sequence is PYFQEQDTVPANDSPSSSESAG. The segment covering 140–156 has biased composition (polar residues); the sequence is EQDTVPANDSPSSSESA. An N-linked (GlcNAc...) asparagine glycan is attached at Asn-199. The helical transmembrane segment at 217–237 threads the bilayer; sequence WWTAVVIMLIVGIITPVFYLL. The Cytoplasmic portion of the chain corresponds to 238-300; it reads YYEILAKVDV…LYRQDPQARD (63 aa). A disordered region spans residues 253–300; that stretch reads VDSSHLHPGLTPPSHHREMGNAIGPTKGIPVGQQDDHRLYRQDPQARD. Over residues 286 to 300 the composition is skewed to basic and acidic residues; it reads QDDHRLYRQDPQARD.

It is found in the cell membrane. Its subcellular location is the golgi apparatus. In terms of biological role, essential for Golgi structural integrity. This is LysM and putative peptidoglycan-binding domain-containing protein 3 (Lysmd3) from Rattus norvegicus (Rat).